The primary structure comprises 1058 residues: MGQEDGNRGERRAAGTPVEVTALYATDGCVITSSIALLTNSLLGAEPVYIFSYDAYTHDGRADGPTEQDRFEESRALYQASGGLNGDSFRVTFCLLGTEVGGTHQARGRTRPMFVCRFERADDVAALQDALAHGTPLQPDHIAATLDAEATFALHANMILALTVAINNASPRTGRDAAAAQYDQGASLRSLVGRTSLGQRGLTTLYVHHEVRVLAAYRRAYYGSAQSPFWFLSKFGPDEKSLVLTTRYYLLQAQRLGGAGATYDLQAIKDICATYAIPHAPRPDTVSAASLTSFAAITRFCCTSQYARGAAAAGFPLYVERRIAADVRETSALEKFITHDRSCLRVSDREFITYIYLAHFECFSPPRLATHLRAVTTHDPNPAASTEQPSPLGREAVEQFFCHVRAQLNIGEYVKHNVTPRETVLDGDTAKAYLRARTYAPGALTPAPAYCGAVDSATKMMGRLADAEKLLVPRGWPAFAPASPGEDTAGGTPPPQTCGIVKRLLRLAATEQQGPTPPAIAALIRNAAVQTPLPVYRISMVPTGQAFAALAWDDWARITRDARLAEAVVSAEAAAHPDHGALGRRLTDRIRAQGPVMPPGGLDAGGQMYVNRNEIFNGALAITNIILDLDIALKEPVPFRRLHEALGHFRRGALAAVQLLFPAARVDPDAYPCYFFKSACRPGPASVGSGSGLGNDDDGDWFPCYDDAGDEEWAEDPGAMDTSHDPPDDEVAYFDLCHEVGPTAEPRETDSPVCSCTDKIGLRVCMPVPAPYVVHGSLTMRGVARVIQQAVLLDRDFVEAIGSYVKNFLLIDTGVYAHGHSLRLPYFAKIAPDGPACGRLLPVFVIPPACKDVPAFVAAHADPRRFHFHAPPTYLASPREIRVLHSLGGDYVSFFERKASRNALEHFGRRETLTEVLGRYNVQPDAGGTVEGFASELLGRIVACIETHFPEHAGEYQAVSVRRAVSKDDWVLLQLVPVRGTLQQSLSCLRFKHGRASRATARTFVALSVGANNRLCVSLCQQCFAAKCDSNRLHTLFTIDAGTPCSPSVPCSTSQPSS.

The CHC2-type zinc finger occupies 988-1028; it reads CLRFKHGRASRATARTFVALSVGANNRLCVSLCQQCFAAKC.

Belongs to the herpesviridae DNA primase family. In terms of assembly, associates with the helicase and the primase-associated factor to form the helicase-primase factor.

The protein localises to the host nucleus. Functionally, essential component of the helicase/primase complex. Unwinds the DNA at the replication forks and generates single-stranded DNA for both leading and lagging strand synthesis. The primase initiates primer synthesis and thereby produces large amount of short RNA primers on the lagging strand that the polymerase elongates using dNTPs. The protein is DNA primase of Homo sapiens (Human).